Consider the following 425-residue polypeptide: Decarboxylase flvG (425 aa).

The residue at position 82 (Lys82) is an N6-(pyridoxal phosphate)lysine. Residues Ser213, Gly250, and 281 to 284 contribute to the pyridoxal 5'-phosphate site; that span reads EPGR. 331–332 is a substrate binding site; sequence FE. The active-site Proton donor; shared with dimeric partner is Cys365. Residue Asp366 coordinates substrate. Position 395 (Tyr395) interacts with pyridoxal 5'-phosphate.

The protein belongs to the Orn/Lys/Arg decarboxylase class-II family. As to quaternary structure, homodimer. Only the dimer is catalytically active, as the active sites are constructed of residues from both monomers. Pyridoxal 5'-phosphate is required as a cofactor.

It localises to the cytoplasm. It catalyses the reaction N(6),N(6)-dimethyl-L-lysine + H(+) = N,N-dimethyl-cadaverine + CO2. The protein operates within secondary metabolite biosynthesis; terpenoid biosynthesis. Its function is as follows. Decarboxylase; part of the gene cluster that mediates the biosynthesis of flavunoidine, an alkaloidal terpenoid with a tetracyclic cage-like core connected to dimethylcadaverine via a C-N bond and acylated with 5,5-dimethyl-L-pipecolate. The tetracyclic core is synthesized by the terpene cyclase flvE and the cytochrome P450 monooxygenase flvD. The terpene cyclase flvE catalyzes the cyclization of farnesyl pyrophosphate (FPP) to form (1R,4R,5S)-(+)-acoradiene and the cytochrome P450 monooxygenase flvD is then responsible for oxidative conversion of (1R,4R,5S)-(+)-acoradiene into the tetracyclic cage present in the final product flavunoidine. In parallel, the N-methyltransferase flvH dimethylates L-lysine to give N,N-dimethyl-L-Lysin which is decarboxylated by flvG to afford dimethylcadaverine. The terpene cyclase-like protein flvF is the enzyme that attaches the dimethylcadaverine precusor at the C-7 of the tetracyclic cage to yield pre-flavunoidine. The cytochrome monooxygenase flvC hydroxylates the C-10 position of pre-flavunoidine whereas the NRPS flvI acylates the terpenoid core at the hydroxylated C-10 with dimethylpipecolate to yield final flavunoidine. The bifunctional enzyme flvA and the dehydrogenase flvB are responsible for the synthesis of the dimethylpipecolate precursor. The PLP-dependent lyase domain of flvA might use L-O-acetyl-homoserine and alpha-keto-isovalerate to form an intermediary ketone that can cyclize intramolecularly to yield an imine. The imine can be reduced by flvB to yield the 6-carboxylated pipecolate. The C-terminal alpha-KG-dependent oxygenase domain of flvA is then proposed to catalyze the decarboxylation to yield dimethylpipecolate. This chain is Decarboxylase flvG, found in Aspergillus flavus (strain ATCC 200026 / FGSC A1120 / IAM 13836 / NRRL 3357 / JCM 12722 / SRRC 167).